The primary structure comprises 129 residues: Large ribosomal subunit protein eL32 (129 aa).

This sequence belongs to the eukaryotic ribosomal protein eL32 family.

This Archaeoglobus fulgidus (strain ATCC 49558 / DSM 4304 / JCM 9628 / NBRC 100126 / VC-16) protein is Large ribosomal subunit protein eL32 (rpl32e).